The primary structure comprises 172 residues: Epithelial membrane protein 2 (172 aa).

4 helical membrane-spanning segments follow: residues 1-21 (MLVI…LLFI), 72-92 (TMIL…LQLF), 100-120 (FVLT…GASV), and 148-168 (FILA…YMIL).

Belongs to the PMP-22/EMP/MP20 family. As to quaternary structure, interacts with PTK2; regulates PTK2 activation and localization. Interacts with ITGB3; regulates the levels of the heterodimer ITGA5-ITGB3 integrin surface expression. Interacts with P2RX7 (via C-terminus). Interacts with ITGB1; the interaction may be direct or indirect and ITGB1 has a heterodimer form. In terms of tissue distribution, expressed in glomeruli.

It localises to the golgi apparatus membrane. It is found in the cell membrane. The protein resides in the apical cell membrane. Its subcellular location is the membrane raft. The protein localises to the cytoplasm. It localises to the nucleus. It is found in the perinuclear region. In terms of biological role, functions as a key regulator of cell membrane composition by regulating protein surface expression. Also, plays a role in regulation of processes including cell migration, cell proliferation, cell contraction and cell adhesion. Regulates transepithelial migration of neutrophils into the alveolar lumen, potentially via mediation of cell surface expression of adhesion markers and lipid raft formation. Negatively regulates caveolae formation by reducing CAV1 expression and CAV1 amount by increasing lysosomal degradation. Facilitates surface trafficking and the formation of lipid rafts bearing GPI-anchor proteins. Regulates surface expression of MHC1 and ICAM1 proteins increasing susceptibility to T-cell mediated cytotoxicity. Regulates the plasma membrane expression of the integrin heterodimers ITGA6-ITGB1, ITGA5-ITGB3 and ITGA5-ITGB1 resulting in modulation of cell-matrix adhesion. Also regulates many processes through PTK2. Regulates blood vessel endothelial cell migration and angiogenesis by regulating VEGF protein expression through PTK2 activation. Regulates cell migration and cell contraction through PTK2 and SRC activation. Regulates focal adhesion density, F-actin conformation and cell adhesion capacity through interaction with PTK2. Positively regulates cell proliferation. Plays a role during cell death and cell blebbing. Promotes angiogenesis and vasculogenesis through induction of VEGFA via a HIF1A-dependent pathway. Also plays a role in embryo implantation by regulating surface trafficking of integrin heterodimer ITGA5-ITGB3. Plays a role in placental angiogenesis and uterine natural killer cell regulation at the maternal-fetal placental interface, however not required in the maternal tissues for a viable pregnancy. Involved in the early stages of embryogenic development and cardiogenesis, potentially via regulation of epithelial-mesenchymal transition timing. May play a role in glomerular filtration. In Rattus norvegicus (Rat), this protein is Epithelial membrane protein 2 (Emp2).